Consider the following 998-residue polypeptide: Mediator of RNA polymerase II transcription subunit 14 (998 aa).

Belongs to the Mediator complex subunit 14 family. As to quaternary structure, component of the Mediator complex.

It localises to the nucleus. Its function is as follows. Component of the Mediator complex, a coactivator involved in the regulated transcription of nearly all RNA polymerase II-dependent genes. Mediator functions as a bridge to convey information from gene-specific regulatory proteins to the basal RNA polymerase II transcription machinery. Mediator is recruited to promoters by direct interactions with regulatory proteins and serves as a scaffold for the assembly of a functional preinitiation complex with RNA polymerase II and the general transcription factors. This chain is Mediator of RNA polymerase II transcription subunit 14 (RGR1), found in Kluyveromyces lactis (strain ATCC 8585 / CBS 2359 / DSM 70799 / NBRC 1267 / NRRL Y-1140 / WM37) (Yeast).